We begin with the raw amino-acid sequence, 370 residues long: Cytoplasmic dynein intermediate light chain DYN3 (370 aa).

The protein belongs to the dynein light intermediate chain DYN3 family. As to quaternary structure, the cytoplasmic dynein is composed of at least two heavy chains and a number of intermediate and light chains.

It localises to the cytoplasm. Its subcellular location is the cytoskeleton. Component of the cytoplasmic dynein which acts as a motor for the intracellular retrograde motility of vesicles and organelles along microtubules. May play an important role in the proper orientation of the mitotic spindle into the budding daughter cell yeast. Probably required for normal progression of the cell cycle. The protein is Cytoplasmic dynein intermediate light chain DYN3 (DYN3) of Kluyveromyces lactis (strain ATCC 8585 / CBS 2359 / DSM 70799 / NBRC 1267 / NRRL Y-1140 / WM37) (Yeast).